The following is a 266-amino-acid chain: Hydroxypyruvate/pyruvate aldolase (266 aa).

His48 acts as the Proton acceptor in catalysis. The a divalent metal cation site is built by Glu152 and Asp178.

The protein belongs to the HpcH/HpaI aldolase family. The cofactor is a divalent metal cation.

The enzyme catalyses D-glyceraldehyde + pyruvate = 2-dehydro-3-deoxy-L-galactonate. It catalyses the reaction 2-dehydro-3-deoxy-D-gluconate = D-glyceraldehyde + pyruvate. Its function is as follows. Aldolase which can catalyze in vitro the aldolisation reaction between hydroxypyruvate (HPA) or pyruvate (PA) and D-glyceraldehyde (D-GA). The condensation of pyruvate and D-glyceraldehyde produces 2-dehydro-3-deoxy-L-galactonate as the major product and 2-dehydro-3-deoxy-D-gluconate. Has weak activity with hydroxypyruvate and D-glyceraldehyde. In Agrobacterium fabrum (strain C58 / ATCC 33970) (Agrobacterium tumefaciens (strain C58)), this protein is Hydroxypyruvate/pyruvate aldolase.